The primary structure comprises 269 residues: 4-hydroxy-tetrahydrodipicolinate reductase (269 aa).

NAD(+)-binding positions include 11-16 (GASGRM) and Glu37. Arg38 is a binding site for NADP(+). NAD(+) contacts are provided by residues 101–103 (GTT) and 125–128 (AGNM). The active-site Proton donor/acceptor is His158. His159 lines the (S)-2,3,4,5-tetrahydrodipicolinate pocket. Catalysis depends on Lys162, which acts as the Proton donor. 168 to 169 (GT) is a binding site for (S)-2,3,4,5-tetrahydrodipicolinate.

It belongs to the DapB family.

The protein resides in the cytoplasm. It carries out the reaction (S)-2,3,4,5-tetrahydrodipicolinate + NAD(+) + H2O = (2S,4S)-4-hydroxy-2,3,4,5-tetrahydrodipicolinate + NADH + H(+). The catalysed reaction is (S)-2,3,4,5-tetrahydrodipicolinate + NADP(+) + H2O = (2S,4S)-4-hydroxy-2,3,4,5-tetrahydrodipicolinate + NADPH + H(+). It functions in the pathway amino-acid biosynthesis; L-lysine biosynthesis via DAP pathway; (S)-tetrahydrodipicolinate from L-aspartate: step 4/4. Its function is as follows. Catalyzes the conversion of 4-hydroxy-tetrahydrodipicolinate (HTPA) to tetrahydrodipicolinate. The polypeptide is 4-hydroxy-tetrahydrodipicolinate reductase (Ruegeria pomeroyi (strain ATCC 700808 / DSM 15171 / DSS-3) (Silicibacter pomeroyi)).